The chain runs to 112 residues: MKITVVLVLLATFLGCVMIHESEASTTTTSTSASATTTTSASATTTTSASATTTTSASATTTTASPSSSSKKKTVTHYKRKVKRPKKVRKITRRRGLRSRNGRSSRNRRSEE.

Residues 1-24 (MKITVVLVLLATFLGCVMIHESEA) form the signal peptide. The segment covering 24 to 69 (ASTTTTSTSASATTTTSASATTTTSASATTTTSASATTTTASPSSS) has biased composition (low complexity). Residues 24-112 (ASTTTTSTSA…RSSRNRRSEE (89 aa)) are disordered. 4 repeat units span residues 31-38 (TSASATTT), 39-46 (TSASATTT), 47-54 (TSASATTT), and 55-62 (TSASATTT). Residues 31–62 (TSASATTTTSASATTTTSASATTTTSASATTT) are 4 X 8 AA tandem repeats of T-S-A-S-A-T-T-T. The span at 70 to 112 (SKKKTVTHYKRKVKRPKKVRKITRRRGLRSRNGRSSRNRRSEE) shows a compositional bias: basic residues.

The protein to NG-1, also to SGS-3. Salivary gland specific.

Its subcellular location is the secreted. The chain is Protein new-glue 2 (ng2) from Drosophila melanogaster (Fruit fly).